Here is a 285-residue protein sequence, read N- to C-terminus: MFNWVKTAMLMAAITALFIVIGGMIGGSRGMTIALLFALGMNFFSYWFSDKMVLRMYNAQEVDENTAPQFYRMVRELATRANLPMPRVYLINEDAPNAFATGRNPEHAAVAATTGILRVLSEREMRGVMAHELAHVKHRDILISTITATMAGAISALANFAMFFGGRDENGRPANPIAGIAVALLAPIAGALIQMAISRAREFEADRGGAQISGDPQSLATALDKIHRYAAGIPFQAAEAHPATAQMMIMNPLHGGGLQNLFSTHPATEERIARLMEMARTGRFE.

Helical transmembrane passes span 7 to 27 and 30 to 50; these read TAML…MIGG and GMTI…WFSD. His-131 is a binding site for Zn(2+). Glu-132 is a catalytic residue. His-135 contributes to the Zn(2+) binding site. 2 helical membrane-spanning segments follow: residues 146 to 166 and 177 to 197; these read ITAT…FFGG and IAGI…QMAI. Position 202 (Glu-202) interacts with Zn(2+).

This sequence belongs to the peptidase M48B family. The cofactor is Zn(2+).

The protein resides in the cell inner membrane. This chain is Protease HtpX homolog, found in Burkholderia cenocepacia (strain HI2424).